We begin with the raw amino-acid sequence, 458 residues long: UDP-N-acetylmuramate--L-alanine ligase (458 aa).

Position 118–124 (118–124) interacts with ATP; it reads GTHGKTT.

It belongs to the MurCDEF family.

It localises to the cytoplasm. The enzyme catalyses UDP-N-acetyl-alpha-D-muramate + L-alanine + ATP = UDP-N-acetyl-alpha-D-muramoyl-L-alanine + ADP + phosphate + H(+). It functions in the pathway cell wall biogenesis; peptidoglycan biosynthesis. Cell wall formation. The sequence is that of UDP-N-acetylmuramate--L-alanine ligase from Clostridium botulinum (strain Langeland / NCTC 10281 / Type F).